The primary structure comprises 358 residues: Heavy metal-associated isoprenylated plant protein 37 (358 aa).

The HMA domain occupies 12-75; it reads IQTFSLRVNI…KLVKAGKHAE (64 aa). Positions 23 and 26 each coordinate a metal cation. Disordered stretches follow at residues 100–194 and 332–358; these read QKGQ…QNTQ and QQQS…CNIM. Acidic residues predominate over residues 128 to 141; it reads AEEDGDGSEEEDGD. The segment covering 148-181 has biased composition (low complexity); it reads ANQQQQQNVVNAKKNSGGAAMNNGNNGVNAASKK. 2 stretches are compositionally biased toward polar residues: residues 184–194 and 339–358; these read QKQSNHNQNTQ and HATN…CNIM. C355 carries the cysteine methyl ester modification. C355 carries the S-farnesyl cysteine lipid modification. A propeptide spans 356 to 358 (removed in mature form); the sequence is NIM.

Belongs to the HIPP family.

In terms of biological role, heavy-metal-binding protein. This chain is Heavy metal-associated isoprenylated plant protein 37, found in Arabidopsis thaliana (Mouse-ear cress).